The chain runs to 1106 residues: Probable ATP-citrate synthase (1106 aa).

3 residues coordinate citrate: asparagine 358, threonine 360, and arginine 391. Residues 442-459 (APQTTGQFLLSPERNTGG) show a composition bias toward polar residues. Positions 442–478 (APQTTGQFLLSPERNTGGTERAPPSPAANATPTEHPL) are disordered. Residues 701 to 721 (VIRYQNDDRVKMIVLLGEVGG) and 752 to 778 (ITSEVQFGHAGASANALGETAACKNAA) each bind ATP. Residue glutamate 718 participates in Mg(2+) binding. The active-site Tele-phosphohistidine intermediate is the histidine 760. CoA is bound at residue 779–789 (LRASGALVPES).

In the N-terminal section; belongs to the succinate/malate CoA ligase beta subunit family. It in the C-terminal section; belongs to the succinate/malate CoA ligase alpha subunit family. Homotetramer.

Its subcellular location is the cytoplasm. The enzyme catalyses oxaloacetate + acetyl-CoA + ADP + phosphate = citrate + ATP + CoA. In terms of biological role, catalyzes the cleavage of citrate into oxaloacetate and acetyl-CoA, the latter serving as common substrate in multiple biochemical reactions in protein, carbohydrate and lipid metabolism. The sequence is that of Probable ATP-citrate synthase from Caenorhabditis elegans.